The chain runs to 80 residues: Kappa-actitoxin-Avd4f (80 aa).

The first 19 residues, 1-19, serve as a signal peptide directing secretion; sequence MNKALFLCLVVLCAAVVFA. The propeptide occupies 20 to 31; it reads AEDLQKAKHAPF. Intrachain disulfides connect Cys-41–Cys-76, Cys-43–Cys-69, and Cys-59–Cys-77.

The protein belongs to the sea anemone type 3 (BDS) potassium channel toxin family. As to expression, moderately expressed in the ectodermal tissue from the distal and proximal tentacles, body wall, and oral disk.

The protein localises to the secreted. Its subcellular location is the nematocyst. Blocks Kv3 voltage-gated potassium channels. Reduces blood pressure. This chain is Kappa-actitoxin-Avd4f, found in Anemonia viridis (Snakelocks anemone).